We begin with the raw amino-acid sequence, 358 residues long: tRNA-specific 2-thiouridylase MnmA (358 aa).

Residues 6-13 (ALSGGVDS) and Met32 each bind ATP. Cys103 (nucleophile) is an active-site residue. Cys103 and Cys201 form a disulfide bridge. Gly127 provides a ligand contact to ATP. Residues 151–153 (KDQ) are interaction with tRNA. Cys201 acts as the Cysteine persulfide intermediate in catalysis.

It belongs to the MnmA/TRMU family.

The protein resides in the cytoplasm. It catalyses the reaction S-sulfanyl-L-cysteinyl-[protein] + uridine(34) in tRNA + AH2 + ATP = 2-thiouridine(34) in tRNA + L-cysteinyl-[protein] + A + AMP + diphosphate + H(+). Its function is as follows. Catalyzes the 2-thiolation of uridine at the wobble position (U34) of tRNA, leading to the formation of s(2)U34. In Thermotoga neapolitana (strain ATCC 49049 / DSM 4359 / NBRC 107923 / NS-E), this protein is tRNA-specific 2-thiouridylase MnmA.